The primary structure comprises 190 residues: Apolipoprotein M (190 aa).

Residues 1–17 (MFHQVWAALLYLYGLLF) form the signal peptide. Disulfide bonds link C23/C169, C95/C185, and C130/C159. Tetradecanoate-binding residues include E138 and R145.

This sequence belongs to the calycin superfamily. Lipocalin family. Highly divergent. Interacts with LRP2; LRP2 mediates APOM renal uptake and subsequent lysosomal degradation. In terms of tissue distribution, expressed by the liver; secreted in plasma.

The protein localises to the secreted. Probably involved in lipid transport. Can bind sphingosine-1-phosphate, myristic acid, palmitic acid and stearic acid, retinol, all-trans-retinoic acid and 9-cis-retinoic acid. In Rattus norvegicus (Rat), this protein is Apolipoprotein M (Apom).